The following is a 190-amino-acid chain: MNNYIFIISAPSGAGKSSLLKAFLATDIGKDNYAVAISHTTREPRVGEINSREYYFVTVAEFEQLLSQDGFIEYAKVFKNYYGTSKAELDRLLALGKNIILEINWQGAQQTRAIYGDRAKSIFILPPSLDELRKRLEKRNTDSKETIDYRMEQVQSEISHADEYDYLLVNDDFSQSLEQLCKYFEQNIQS.

A Guanylate kinase-like domain is found at 3–185 (NYIFIISAPS…SLEQLCKYFE (183 aa)). Residue 10-17 (APSGAGKS) participates in ATP binding.

Belongs to the guanylate kinase family.

Its subcellular location is the cytoplasm. The enzyme catalyses GMP + ATP = GDP + ADP. Functionally, essential for recycling GMP and indirectly, cGMP. The polypeptide is Guanylate kinase (Francisella tularensis subsp. holarctica (strain OSU18)).